A 413-amino-acid polypeptide reads, in one-letter code: Glucose-1-phosphate adenylyltransferase (413 aa).

Alpha-D-glucose 1-phosphate-binding positions include Gly161, 176–177 (EK), and Ser195.

Belongs to the bacterial/plant glucose-1-phosphate adenylyltransferase family. Homotetramer.

It carries out the reaction alpha-D-glucose 1-phosphate + ATP + H(+) = ADP-alpha-D-glucose + diphosphate. The protein operates within glycan biosynthesis; glycogen biosynthesis. In terms of biological role, involved in the biosynthesis of ADP-glucose, a building block required for the elongation reactions to produce glycogen. Catalyzes the reaction between ATP and alpha-D-glucose 1-phosphate (G1P) to produce pyrophosphate and ADP-Glc. This Anaeromyxobacter dehalogenans (strain 2CP-C) protein is Glucose-1-phosphate adenylyltransferase.